A 205-amino-acid chain; its full sequence is Gap junction epsilon-1 protein (205 aa).

Topologically, residues M1–F23 are cytoplasmic. Residues H24–Y44 traverse the membrane as a helical segment. At G45–S76 the chain is on the extracellular side. 2 disulfides stabilise this stretch: C53/C161 and C64/C148. Residues F77–A97 form a helical membrane-spanning segment. Topologically, residues C98–Y112 are cytoplasmic. Residues T113–L133 traverse the membrane as a helical segment. Residues Q134 to T170 are Extracellular-facing. Residues I171 to I191 traverse the membrane as a helical segment. The Cytoplasmic portion of the chain corresponds to F192–Q205.

This sequence belongs to the connexin family. Beta-type (group I) subfamily. As to quaternary structure, a connexon is composed of a hexamer of connexins. As to expression, not detected in lens or retina.

Its subcellular location is the cell membrane. Mediates calcium-independent ATP release, suggesting activity as a hemichannel. Does not form functional gap junctions. This chain is Gap junction epsilon-1 protein (GJE1), found in Homo sapiens (Human).